We begin with the raw amino-acid sequence, 166 residues long: MALRLEDKKAIVAEVNEAAKGALSAVAADSRGVTVGAMTGLRKKAREAGVYVRVVRNTLARRAVEGTAFECLAETFTGPTLIAFSNEHPGAAARLLKDFAKEQANFEVKGAAFEGNFIPAADIDRLAKLPTYEEALAQLMMTMKEASAGKFVRTLAALRDQKQEAA.

Belongs to the universal ribosomal protein uL10 family. As to quaternary structure, part of the ribosomal stalk of the 50S ribosomal subunit. The N-terminus interacts with L11 and the large rRNA to form the base of the stalk. The C-terminus forms an elongated spine to which L12 dimers bind in a sequential fashion forming a multimeric L10(L12)X complex.

Functionally, forms part of the ribosomal stalk, playing a central role in the interaction of the ribosome with GTP-bound translation factors. The chain is Large ribosomal subunit protein uL10 from Shewanella oneidensis (strain ATCC 700550 / JCM 31522 / CIP 106686 / LMG 19005 / NCIMB 14063 / MR-1).